A 256-amino-acid chain; its full sequence is MDDSMDLDLDCVIAQPSSTIVMMPLSPISTRKRRRHPMNKRRYAKRRFTPVEPNDIIMCDKPTHCIRLVFDQSLRWVHFDGIKNILTDYDVIFNPDLHVTVALVCAGNGVTFSDLTPLTFILADMLLEFNGIFTLGQTLVIGAREYHWLPQELKTNVGKAIPQAKEWLVDHGYNVYHTGLPTHMSLAKLHSLDFVQQSYVGSKFFIKHSHTTEYAMPVCLQVIAIDGEKVDGRSKPLFQYPIHNHYRHYRACFPGR.

It localises to the host nucleus. It is found in the host nucleolus. The protein localises to the host cytoplasm. Plays a role in the inhibition of host innate immunity by inhibiting the interaction between host IKBKE and MAVS. In turn, this inhibition prevents the production of host interferon beta. Additionally, may also interfere with host antiviral response within the nucleus. This Bat coronavirus HKU5 (BtCoV) protein is Non-structural protein ORF4b (ORF4b).